We begin with the raw amino-acid sequence, 555 residues long: Glypican-6 (555 aa).

A signal peptide spans 1-23; the sequence is MPSWIGAVILPLLGLLLSLPAGA. Positions 348–357 are enriched in low complexity; the sequence is PALRSARSAP. A disordered region spans residues 348–376; sequence PALRSARSAPENFNTRFRPYNPEERPTTA. A lipid anchor (GPI-anchor amidated serine) is attached at Ser529. The propeptide at 530–555 is removed in mature form; it reads SAAQRGHSLLSWSLTCIVLALQRLCR.

The protein belongs to the glypican family.

Its subcellular location is the cell membrane. The protein resides in the secreted. The protein localises to the extracellular space. Cell surface proteoglycan that bears heparan sulfate. Putative cell surface coreceptor for growth factors, extracellular matrix proteins, proteases and anti-proteases. Enhances migration and invasion of cancer cells through WNT5A signaling. This Pongo abelii (Sumatran orangutan) protein is Glypican-6 (GPC6).